A 140-amino-acid chain; its full sequence is MKFLAVVSLLAATALALPNAGVVHPTFASADKYTLQQAQNKCGEHTTLSCCNHVSKVGDTTAFNYGLLNGLLGNAISGPEGVGILSGCQKISVTALIGVDDLLNKQCQQNVACCQDNKSVATGGLINIATPACVALDSII.

The signal sequence occupies residues 1 to 16 (MKFLAVVSLLAATALA). 4 cysteine pairs are disulfide-bonded: C42–C113, C50–C107, C51–C88, and C114–C133. N-linked (GlcNAc...) asparagine glycosylation is present at N117.

This sequence belongs to the fungal hydrophobin family. As to quaternary structure, self-assembles to form functional amyloid fibrils called rodlets. Self-assembly into fibrillar rodlets occurs spontaneously at hydrophobic:hydrophilic interfaces and the rodlets further associate laterally to form amphipathic monolayers.

The protein localises to the secreted. The protein resides in the spore wall. In terms of biological role, aerial growth, conidiation, and dispersal of filamentous fungi in the environment rely upon a capability of their secreting small amphipathic proteins called hydrophobins (HPBs) with low sequence identity. Class I can self-assemble into an outermost layer of rodlet bundles on aerial cell surfaces, conferring cellular hydrophobicity that supports fungal growth, development and dispersal; whereas Class II form highly ordered films at water-air interfaces through intermolecular interactions but contribute nothing to the rodlet structure. RodB is a class I hydrophobin that, unlike rodA, is not required for rodlet formation. In Aspergillus fumigatus (strain ATCC MYA-4609 / CBS 101355 / FGSC A1100 / Af293) (Neosartorya fumigata), this protein is Class I hydrophobin B.